The primary structure comprises 440 residues: Ferredoxin--NADP reductase (440 aa).

The CpcD-like domain occupies 17–75; that stretch reads SRVFVYEVVGMRQNEETDQTNYPIRKSGSVFIRVPYNRMNQEMQRITRLGGKIVTIQTV. The segment at 99-142 is disordered; it reads KSEGNGKATPVKTDSGAKAFAKPPAEEQLKKKDNKGNTMTQAKA. Positions 122–133 are enriched in basic and acidic residues; sequence PAEEQLKKKDNK. The FAD-binding FR-type domain occupies 155–279; that stretch reads NAPFIGKVIS…TGPVGKEMLL (125 aa). FAD contacts are provided by residues 214–217, 235–237, Tyr241, 253–255, and Thr294; these read RLYS, CVR, and VCS. The NADP(+) site is built by Ser217 and Arg237. NADP(+) contacts are provided by residues Thr294, 330-331, 360-361, 370-374, 399-400, and Glu438; these read VP, SR, RMYIQ, and GL.

Belongs to the ferredoxin--NADP reductase type 1 family. FAD is required as a cofactor.

The protein localises to the cellular thylakoid membrane. The enzyme catalyses 2 reduced [2Fe-2S]-[ferredoxin] + NADP(+) + H(+) = 2 oxidized [2Fe-2S]-[ferredoxin] + NADPH. In Nostoc sp. (strain ATCC 29151 / PCC 7119) (Anabaena sp.), this protein is Ferredoxin--NADP reductase (petH).